Here is a 299-residue protein sequence, read N- to C-terminus: Oxygen-dependent coproporphyrinogen-III oxidase (299 aa).

Serine 92 serves as a coordination point for substrate. Residues histidine 96 and histidine 106 each coordinate Mn(2+). Histidine 106 (proton donor) is an active-site residue. Asparagine 108–arginine 110 is a binding site for substrate. Mn(2+) is bound by residues histidine 145 and histidine 175. The important for dimerization stretch occupies residues tyrosine 240–glutamate 275. Residue glycine 258–arginine 260 coordinates substrate.

Belongs to the aerobic coproporphyrinogen-III oxidase family. In terms of assembly, homodimer. Mn(2+) is required as a cofactor.

Its subcellular location is the cytoplasm. The catalysed reaction is coproporphyrinogen III + O2 + 2 H(+) = protoporphyrinogen IX + 2 CO2 + 2 H2O. The protein operates within porphyrin-containing compound metabolism; protoporphyrin-IX biosynthesis; protoporphyrinogen-IX from coproporphyrinogen-III (O2 route): step 1/1. Involved in the heme biosynthesis. Catalyzes the aerobic oxidative decarboxylation of propionate groups of rings A and B of coproporphyrinogen-III to yield the vinyl groups in protoporphyrinogen-IX. This is Oxygen-dependent coproporphyrinogen-III oxidase from Escherichia fergusonii (strain ATCC 35469 / DSM 13698 / CCUG 18766 / IAM 14443 / JCM 21226 / LMG 7866 / NBRC 102419 / NCTC 12128 / CDC 0568-73).